Here is a 185-residue protein sequence, read N- to C-terminus: Protein LURP-one-related 13 (185 aa).

This sequence belongs to the LOR family.

Functionally, might be related to the phospholipid scramblase and tubby-like superfamily of membrane tethered transcription factors. The chain is Protein LURP-one-related 13 from Arabidopsis thaliana (Mouse-ear cress).